The following is a 635-amino-acid chain: Sodium- and chloride-dependent creatine transporter 1 (635 aa).

The disordered stretch occupies residues 1-27 (MAKKSAENGIYSVSGDEKKGPLIVSGP). Over 1–60 (MAKKSAENGIYSVSGDEKKGPLIVSGPDGAPAKGDGPAGLGAPGGRLAVPPRETWTRQMD) the chain is Cytoplasmic. The chain crosses the membrane as a helical span at residues 61 to 81 (FIMSCVGFAVGLGNVWRFPYL). Topologically, residues 82-87 (CYKNGG) are extracellular. Residues 88-108 (GVFLIPYVLIALVGGIPIFFL) traverse the membrane as a helical segment. Residues 109 to 138 (EISLGQFMKAGSINVWNICPLFKGLGYASM) are Cytoplasmic-facing. A helical membrane pass occupies residues 139 to 159 (VIVFYCNTYYIMVLAWGFYYL). Topologically, residues 160–230 (VKSFTTTLPW…LSTGLEVPGA (71 aa)) are extracellular. N192 and N197 each carry an N-linked (GlcNAc...) asparagine glycan. A helical transmembrane segment spans residues 231–251 (LNWEVTLCLLACWVLVYFCVW). At 252 to 269 (KGVKSTGKIVYFTATFPY) the chain is on the cytoplasmic side. A helical membrane pass occupies residues 270–290 (VVLVVLLVRGVLLPGALDGII). At 291-304 (YYLKPDWSKLGSPQ) the chain is on the extracellular side. Residues 305–325 (VWIDAGTQIFFSYAIGLGALT) form a helical membrane-spanning segment. The Cytoplasmic segment spans residues 326–341 (ALGSYNRFNNNCYKDA). Residues 342 to 362 (IILALINSGTSFFAGFVVFSI) form a helical membrane-spanning segment. The Extracellular portion of the chain corresponds to 363–394 (LGFMATEQGVHISKVAESGPGLAFIAYPRAVT). Residues 395 to 415 (LMPVAPLWAALFFFMLLLLGL) form a helical membrane-spanning segment. The Cytoplasmic portion of the chain corresponds to 416–444 (DSQFVGVEGFITGLLDLLPASYYFRFQRE). Residues 445-465 (ISVALCCALCFVIDLSMVTDG) form a helical membrane-spanning segment. Over 466–479 (GMYVFQLFDYYSAS) the chain is Extracellular. The helical transmembrane segment at 480 to 500 (GTTLLWQAFWECVVVAWVYGA) threads the bilayer. Residues 501–520 (DRFMDDIACMIGYRPCPWMK) lie on the Cytoplasmic side of the membrane. A helical membrane pass occupies residues 521 to 541 (WCWSFFTPLVCMGIFIFNIVY). Over 542-560 (YEPLVYNNTYVYPWWGEAM) the chain is Extracellular. N-linked (GlcNAc...) asparagine glycosylation occurs at N548. A helical transmembrane segment spans residues 561 to 581 (GWAFALSSMLCVPLHLLGCLL). Over 582-635 (RAKGTMAERWQHLTQPIWGLHHLEYRAQDADVRGLTTLTPVSESSKVVVVESVM) the chain is Cytoplasmic. 2 positions are modified to phosphothreonine: T617 and T620. Phosphoserine is present on S623.

Belongs to the sodium:neurotransmitter symporter (SNF) (TC 2.A.22) family. SLC6A8 subfamily. Post-translationally, glycosylated. As to expression, brain. Highly expressed in brain capillaries branching in all cortical layers and moderately expressed in neuronal perikarya (at protein level).

The protein resides in the cell membrane. Its subcellular location is the apical cell membrane. The catalysed reaction is creatine(out) + chloride(out) + 2 Na(+)(out) = creatine(in) + chloride(in) + 2 Na(+)(in). In terms of biological role, creatine:sodium symporter which mediates the uptake of creatine. Plays an important role in supplying creatine to the brain via the blood-brain barrier. The polypeptide is Sodium- and chloride-dependent creatine transporter 1 (Slc6a8) (Mus musculus (Mouse)).